We begin with the raw amino-acid sequence, 424 residues long: MFLLPRFVLVSCIIGSLGFDNPPTNVVSHLNGDWFLFGDSRSDCNHVVTTNPRNYSYMDLNPALCGSGKISAKAGNSIFRSFHFTDFYNYTGEGQQIIFYEGVNFTPYHAFKCITSGSNDIWMQNKGLFYTQVYKNMAVYRSLTFVNVPYVYNGSAQSTALCKSGSLVLNNPAYIAREANFGDYYYKVEADFYLSGCDEYIVPLCIFNGKFLSNTKYYDDSQYYFNKDTGVIYGLNSTETITTGFDFNCHYLVLPSGNYLAISNELLLTVPTKAICLNKRKDFTPVQVVDSRWNNARQSDNMTAVACQPPYCYFRNSTTNYVGVYDINHGDAGFTSILSGLLYDSPCFSQQGVFRYDNVSSVWPLYPYGRCPTAADINTPDVPICVYDPLPIILLGILLGVAVIIIVVLLLYFMVDNGTRLHDA.

Positions 1 to 16 (MFLLPRFVLVSCIIGS) are cleaved as a signal peptide. The interval 7 to 127 (FVLVSCIIGS…SNDIWMQNKG (121 aa)) is esterase domain 1. At 17–392 (LGFDNPPTNV…PICVYDPLPI (376 aa)) the chain is on the virion surface side. The active-site Nucleophile is the Ser40. Cys44 and Cys65 are oxidised to a cystine. 5 N-linked (GlcNAc...) asparagine; by host glycosylation sites follow: Asn54, Asn89, Asn153, Asn236, and Asn301. 3 cysteine pairs are disulfide-bonded: Cys113-Cys162, Cys197-Cys276, and Cys205-Cys249. The segment at 128 to 266 (LFYTQVYKNM…GNYLAISNEL (139 aa)) is receptor binding. Positions 267–379 (LLTVPTKAIC…RCPTAADINT (113 aa)) are esterase domain 2. The cysteines at positions 307 and 312 are disulfide-linked. N-linked (GlcNAc...) asparagine; by host glycosylation occurs at Asn316. Residues Asp326 and His329 each act as charge relay system in the active site. An intrachain disulfide couples Cys347 to Cys371. Asn358 carries an N-linked (GlcNAc...) asparagine; by host glycan. Residues 393-413 (ILLGILLGVAVIIIVVLLLYF) traverse the membrane as a helical segment. The Intravirion segment spans residues 414-424 (MVDNGTRLHDA). An N-linked (GlcNAc...) asparagine; by host glycan is attached at Asn417.

Belongs to the influenza type C/coronaviruses hemagglutinin-esterase family. Homodimer; disulfide-linked. Forms a complex with the M protein in the pre-Golgi. Associates then with S-M complex to form a ternary complex S-M-HE. In terms of processing, N-glycosylated in the host RER.

The protein resides in the virion membrane. It localises to the host cell membrane. It carries out the reaction N-acetyl-9-O-acetylneuraminate + H2O = N-acetylneuraminate + acetate + H(+). The enzyme catalyses N-acetyl-4-O-acetylneuraminate + H2O = N-acetylneuraminate + acetate + H(+). Functionally, structural protein that makes short spikes at the surface of the virus. Contains receptor binding and receptor-destroying activities. Mediates de-O-acetylation of N-acetyl-4-O-acetylneuraminic acid, which is probably the receptor determinant recognized by the virus on the surface of erythrocytes and susceptible cells. This receptor-destroying activity is important for virus release as it probably helps preventing self-aggregation and ensures the efficient spread of the progeny virus from cell to cell. May serve as a secondary viral attachment protein for initiating infection, the spike protein being the major one. May become a target for both the humoral and the cellular branches of the immune system. This Bovine coronavirus (strain 98TXSF-110-LUN) (BCoV-LUN) protein is Hemagglutinin-esterase.